The sequence spans 188 residues: Mitochondrial import receptor subunit TOM20 homolog (188 aa).

Residues 1–12 (MTDTLFGFNKSN) lie on the Mitochondrial intermembrane side of the membrane. A helical membrane pass occupies residues 13–31 (VVLAAGVAGAAFLGYCIYF). The Cytoplasmic portion of the chain corresponds to 32-188 (DHKRINAPDY…ELIDDTDDLE (157 aa)). Disordered stretches follow at residues 48–67 (KRRAQAGSGGMAARRPPAGG) and 155–188 (ADEAENEPPLVQYLGDGPPPAQIQELIDDTDDLE). Residues 58 to 67 (MAARRPPAGG) are compositionally biased toward low complexity.

Belongs to the Tom20 family. In terms of assembly, forms part of the preprotein translocase complex of the outer mitochondrial membrane (TOM complex).

The protein resides in the mitochondrion outer membrane. In terms of biological role, central component of the receptor complex responsible for the recognition and translocation of cytosolically synthesized mitochondrial preproteins. Together with TOM22 functions as the transit peptide receptor at the surface of the mitochondrion outer membrane and facilitates the movement of preproteins into the translocation pore. In Caenorhabditis briggsae, this protein is Mitochondrial import receptor subunit TOM20 homolog (tomm-20).